The chain runs to 312 residues: Methionyl-tRNA formyltransferase (312 aa).

Ser109–Pro112 provides a ligand contact to (6S)-5,6,7,8-tetrahydrofolate.

This sequence belongs to the Fmt family.

The enzyme catalyses L-methionyl-tRNA(fMet) + (6R)-10-formyltetrahydrofolate = N-formyl-L-methionyl-tRNA(fMet) + (6S)-5,6,7,8-tetrahydrofolate + H(+). In terms of biological role, attaches a formyl group to the free amino group of methionyl-tRNA(fMet). The formyl group appears to play a dual role in the initiator identity of N-formylmethionyl-tRNA by promoting its recognition by IF2 and preventing the misappropriation of this tRNA by the elongation apparatus. This chain is Methionyl-tRNA formyltransferase, found in Nitrosospira multiformis (strain ATCC 25196 / NCIMB 11849 / C 71).